Consider the following 436-residue polypeptide: ATP-dependent protease ATPase subunit HslU (436 aa).

ATP is bound by residues Ile-19, 61 to 65 (GVGKT), Asp-249, Glu-314, and Arg-386.

Belongs to the ClpX chaperone family. HslU subfamily. As to quaternary structure, a double ring-shaped homohexamer of HslV is capped on each side by a ring-shaped HslU homohexamer. The assembly of the HslU/HslV complex is dependent on binding of ATP.

It is found in the cytoplasm. Its function is as follows. ATPase subunit of a proteasome-like degradation complex; this subunit has chaperone activity. The binding of ATP and its subsequent hydrolysis by HslU are essential for unfolding of protein substrates subsequently hydrolyzed by HslV. HslU recognizes the N-terminal part of its protein substrates and unfolds these before they are guided to HslV for hydrolysis. The protein is ATP-dependent protease ATPase subunit HslU of Bartonella henselae (strain ATCC 49882 / DSM 28221 / CCUG 30454 / Houston 1) (Rochalimaea henselae).